The following is a 519-amino-acid chain: Cytochrome P450 52A10 (519 aa).

Residue C466 coordinates heme.

This sequence belongs to the cytochrome P450 family. Heme serves as cofactor.

It localises to the membrane. Functionally, together with an NADPH cytochrome P450 the enzyme system catalyzes the terminal hydroxylation as the first step in the assimilation of alkanes and fatty acids. The sequence is that of Cytochrome P450 52A10 (CYP52A10) from Candida maltosa (Yeast).